The chain runs to 89 residues: MTETNSRGRKIEVVGEVISDKMDKTISVLIYRMVKHAKYGKYVKKTSVFKAHDEKNQAKIGDIVKIRETRPLSKTKRWALAEVVETAKA.

This sequence belongs to the universal ribosomal protein uS17 family. In terms of assembly, part of the 30S ribosomal subunit.

Functionally, one of the primary rRNA binding proteins, it binds specifically to the 5'-end of 16S ribosomal RNA. This is Small ribosomal subunit protein uS17 from Bdellovibrio bacteriovorus (strain ATCC 15356 / DSM 50701 / NCIMB 9529 / HD100).